An 88-amino-acid chain; its full sequence is Small ribosomal subunit protein bS20 (88 aa).

A disordered region spans residues 1–36 (MANTSSAKKATRKIARRTAVNKSRRTQMRGSVRTVE).

This sequence belongs to the bacterial ribosomal protein bS20 family.

Its function is as follows. Binds directly to 16S ribosomal RNA. The chain is Small ribosomal subunit protein bS20 from Rhodopseudomonas palustris (strain HaA2).